The sequence spans 388 residues: MNVVLKFVRFYGYRGLRIVKGSMQYVWDDSGRKYLDCHAGHGAAFLGHSNPAIVEAVVRQARELVAASSSFSTPSLEEALTEFSRIAPPWAEEIVFLNTGTEAVEAALKAAWLATGKRGIVALKNSFHGRTLASLSVTWNPRYRRGVPVLDTRFLSPSTDPGEVEKLVPEDTAAIIVEPIQGEGGLTKIYAELAKALREAADRVGALLIFDEIQTGFGRTGRVWAHESLGVEPDIMTAGKSIAGGLPASAVLSREGVLATLASGRHGSTHAANPLSMAAVAAASRFLREEGVPDKARAAGALLEGLLRDRIEGLRLVRGVRGEGLMLGVELRLDPGPVLRCLQESERVLALRSGATVVRLLPPYSISREDAEMVVYGLERCICGGSGC.

Residues 100-101 (GT) and Phe127 each bind pyridoxal 5'-phosphate. Arg130 is a binding site for substrate. Residue 211 to 214 (DEIQ) participates in pyridoxal 5'-phosphate binding. The residue at position 240 (Lys240) is an N6-(pyridoxal phosphate)lysine. Ser268 is a substrate binding site. A pyridoxal 5'-phosphate-binding site is contributed by Thr269.

This sequence belongs to the class-III pyridoxal-phosphate-dependent aminotransferase family. LysJ subfamily. In terms of assembly, homodimer. It depends on pyridoxal 5'-phosphate as a cofactor.

It localises to the cytoplasm. The enzyme catalyses [amino-group carrier protein]-C-terminal-gamma-(L-lysyl)-L-glutamate + 2-oxoglutarate = [amino-group carrier protein]-C-terminal-N-(1-carboxy-5-oxopentan-1-yl)-L-glutamine + L-glutamate. The catalysed reaction is [amino-group carrier protein]-C-terminal-gamma-(L-ornithyl)-L-glutamate + 2-oxoglutarate = [amino-group carrier protein]-C-terminal-gamma-(L-glutamyl-5-semialdehyde)-L-glutamate + L-glutamate. Its pathway is amino-acid biosynthesis; L-lysine biosynthesis via AAA pathway; L-lysine from L-alpha-aminoadipate (Thermus route): step 4/5. It functions in the pathway amino-acid biosynthesis; L-arginine biosynthesis. Involved in both the arginine and lysine biosynthetic pathways. The chain is Putative [LysW]-aminoadipate semialdehyde/glutamate semialdehyde transaminase from Aeropyrum pernix (strain ATCC 700893 / DSM 11879 / JCM 9820 / NBRC 100138 / K1).